Consider the following 119-residue polypeptide: Protein yippee-like 3 (119 aa).

Positions 19 to 116 (RRYSCVHCRA…IELSHMIKDN (98 aa)) constitute a Yippee domain. 4 residues coordinate Zn(2+): Cys23, Cys26, Cys79, and Cys82.

This sequence belongs to the yippee family.

The protein localises to the nucleus. The protein resides in the nucleolus. Its function is as follows. May be involved in proliferation and apoptosis in myeloid precursor cells. This chain is Protein yippee-like 3 (ypel3), found in Oryzias latipes (Japanese rice fish).